A 195-amino-acid chain; its full sequence is Matrix protein (195 aa).

This sequence belongs to the novirhabdovirus matrix protein family. Homomultimer.

The protein localises to the virion. The protein resides in the host cytoplasm. Functionally, the M protein has a crucial role in virus assembly and interacts with the RNP complex as well as with the viral membrane. The polypeptide is Matrix protein (M) (Salmo (IHNV)).